Consider the following 160-residue polypeptide: Baculoviral IAP repeat-containing protein 5.1 (160 aa).

The stretch at 27 to 97 (RLATFADWPF…KRSASCGFLS (71 aa)) is one BIR repeat. Position 43 is a phosphothreonine; by CDK1 (threonine 43). Zn(2+) is bound by residues cysteine 66, cysteine 69, histidine 86, and cysteine 93.

It belongs to the IAP family. In terms of assembly, component of the CPC at least composed of survivin/birc5, incenp, cdca8/borealin and/or cdca9/dasra-A, and aurkb/aurora-B. Interacts directly with incenp (via N-terminus), and may weakly interact with aurkb (via N-terminus) to stabilize the complex. Interacts with GTP-bound ran in both the S and M phases of the cell cycle. Also found in a complex with ubiquitin-mediated signaling proteins including at least usp9x/xFAM, nploc4/npl4 and ufd1. In terms of processing, ubiquitination is required for centrosome-targeting.

The protein resides in the cytoplasm. It localises to the nucleus. Its subcellular location is the chromosome. It is found in the centromere. The protein localises to the cytoskeleton. The protein resides in the spindle. In terms of biological role, component of the chromosomal passenger complex (CPC), a complex that acts as a key regulator of mitosis. The CPC complex has essential functions at the centromere in ensuring correct chromosome alignment and segregation and is required for chromatin-induced microtubule stabilization and spindle assembly. Stimulates the mitotic kinase activity of aurkb/aurora-B in the CPC. Does not appear to exhibit anti-apoptotic activity. This is Baculoviral IAP repeat-containing protein 5.1 (birc5.1) from Xenopus tropicalis (Western clawed frog).